The primary structure comprises 125 residues: Large ribosomal subunit protein bL12 (125 aa).

Belongs to the bacterial ribosomal protein bL12 family. In terms of assembly, homodimer. Part of the ribosomal stalk of the 50S ribosomal subunit. Forms a multimeric L10(L12)X complex, where L10 forms an elongated spine to which 2 to 4 L12 dimers bind in a sequential fashion. Binds GTP-bound translation factors.

Functionally, forms part of the ribosomal stalk which helps the ribosome interact with GTP-bound translation factors. Is thus essential for accurate translation. The polypeptide is Large ribosomal subunit protein bL12 (Campylobacter curvus (strain 525.92)).